The chain runs to 192 residues: Large ribosomal subunit protein uL6 (192 aa).

Belongs to the universal ribosomal protein uL6 family. As to quaternary structure, part of the 50S ribosomal subunit.

In terms of biological role, this protein binds to the 23S rRNA, and is important in its secondary structure. It is located near the subunit interface in the base of the L7/L12 stalk, and near the tRNA binding site of the peptidyltransferase center. The chain is Large ribosomal subunit protein uL6 from Nanoarchaeum equitans (strain Kin4-M).